The following is a 260-amino-acid chain: MVGVTAFGNFDLASLAIYSFWIFLAGLIYYLQTENMREGYPLENEDGTPAANQGPFPLPKPKTFILPHGRGTLTVPGPESEDRPIALARTAVSEGFPHAPTGDPMKDGVGPASWVARRDLPELDGHGHNKIKPMKAAAGFHVSAGKNPIGLPVRGCDLEIAGKVVDIWVDIPEQMARFLEVELKDGSTRLLPMQMVKVQSNRVHVNALSSDLFAGIPTIKSPTEVTLLEEDKICGYVAGGLMYAAPKRKSVVAAMLAEYA.

Residues 1–11 (MVGVTAFGNFD) are Periplasmic-facing. A helical transmembrane segment spans residues 12 to 31 (LASLAIYSFWIFLAGLIYYL). Residues 32–260 (QTENMREGYP…VVAAMLAEYA (229 aa)) are Cytoplasmic-facing.

This sequence belongs to the reaction center PuhA family. Heterotrimer composed of subunits L, M, and H. It depends on a bacteriochlorophyll as a cofactor. Requires a bacteriopheophytin as cofactor. The cofactor is Fe cation. Mg(2+) serves as cofactor. A ubiquinone is required as a cofactor.

It is found in the cellular chromatophore membrane. Functionally, the reaction center is a membrane-bound complex that mediates the initial photochemical event in the electron transfer process of photosynthesis. This is Reaction center protein H chain (puhA) from Cereibacter sphaeroides (strain ATCC 17023 / DSM 158 / JCM 6121 / CCUG 31486 / LMG 2827 / NBRC 12203 / NCIMB 8253 / ATH 2.4.1.) (Rhodobacter sphaeroides).